The chain runs to 87 residues: Cytochrome c oxidase assembly factor 3, mitochondrial (87 aa).

A helical membrane pass occupies residues 47–69; that stretch reads NNLLTAGALGVSVLAIYGYSIFS.

Belongs to the COA3 family.

The protein localises to the mitochondrion membrane. Its function is as follows. Plays a critical role in the biogenesis and activity of cytochrome c oxidase (COX) (complex IV). The chain is Cytochrome c oxidase assembly factor 3, mitochondrial (Ccdc56) from Drosophila melanogaster (Fruit fly).